The following is a 396-amino-acid chain: Elongation factor Tu (396 aa).

The region spanning 10–206 is the tr-type G domain; that stretch reads KPHVNVGTIG…TMDSYIPEPV (197 aa). Residues 19–26 form a G1 region; the sequence is GHVDHGKT. Residue 19–26 coordinates GTP; it reads GHVDHGKT. Thr-26 lines the Mg(2+) pocket. Residues 60–64 are G2; that stretch reads GITIS. The interval 81–84 is G3; that stretch reads DCPG. Residues 81 to 85 and 136 to 139 contribute to the GTP site; these read DCPGH and NKAD. Positions 136–139 are G4; that stretch reads NKAD. A G5 region spans residues 174 to 176; the sequence is SAL.

This sequence belongs to the TRAFAC class translation factor GTPase superfamily. Classic translation factor GTPase family. EF-Tu/EF-1A subfamily. Monomer.

The protein resides in the cytoplasm. It catalyses the reaction GTP + H2O = GDP + phosphate + H(+). In terms of biological role, GTP hydrolase that promotes the GTP-dependent binding of aminoacyl-tRNA to the A-site of ribosomes during protein biosynthesis. The polypeptide is Elongation factor Tu (Legionella pneumophila (strain Lens)).